A 375-amino-acid polypeptide reads, in one-letter code: Protein RIC-3 (375 aa).

Residues 1-29 (MALSAVQKVVLFSCLVLCVSLLLPRAYIA) form the signal peptide. The Lumenal portion of the chain corresponds to 30–90 (RGKPAAQEGN…GGGGGTRPSL (61 aa)). Residues 38–47 (GNTGLFQSSG) show a composition bias toward polar residues. The interval 38-63 (GNTGLFQSSGHHPKPTDGRPGGAHFP) is disordered. Residues 91-111 (VGQIIPIYGFGILLYILYILF) traverse the membrane as a helical segment. The Cytoplasmic portion of the chain corresponds to 112–375 (KLSSKGKSTK…RKRNTKGIEY (264 aa)). Positions 135-165 (KRKITDYELSQLQDKLKETEEAMEKIISRLG) form a coiled coil. Positions 251–375 (SAEQVAEQMG…RKRNTKGIEY (125 aa)) are disordered. Over residues 286–296 (GDQQAQGTISA) the composition is skewed to polar residues. The span at 305-319 (EDIEEDEDEDEDPEV) shows a compositional bias: acidic residues. Residues 365–375 (LRKRNTKGIEY) show a composition bias toward basic residues.

It belongs to the ric-3 family.

The protein localises to the endoplasmic reticulum membrane. Its function is as follows. Molecular chaperone which facilitates proper subunit assembly andsurface trafficking of alpha-7 (CHRNA7) and alpha-8 (CHRNA8) nicotinic acetylcholine receptors. May also promote functional expression of homomeric serotoninergic 5-HT3 receptors, and of heteromeric acetylcholine receptors. This Xenopus tropicalis (Western clawed frog) protein is Protein RIC-3 (ric3).